A 966-amino-acid polypeptide reads, in one-letter code: Muscular LMNA-interacting protein (966 aa).

Phosphoserine is present on S129. Disordered stretches follow at residues E132 to R154, S182 to Q207, L303 to S337, P354 to P388, I434 to S562, K597 to L684, S785 to T837, and S929 to E966. Residues P144 to T810 are required for interaction with ISL1. 2 stretches are compositionally biased toward polar residues: residues K195–Q207 and T325–S337. 3 stretches are compositionally biased toward low complexity: residues P354–S387, T437–T455, and P478–A497. S486 bears the Phosphoserine mark. Over residues T507 to L521 the composition is skewed to polar residues. Composition is skewed to basic and acidic residues over residues G542–R555 and K597–Q607. Polar residues-rich tracts occupy residues S639 to P649 and G657 to L684. Residues S785 to Q797 show a composition bias toward low complexity. The residue at position 791 (S791) is a Phosphoserine. Polar residues predominate over residues T798–T810. Residues S825 to S834 are compositionally biased toward low complexity. Over residues S937–Y946 the composition is skewed to polar residues. A compositionally biased stretch (basic and acidic residues) spans P957–E966.

In terms of assembly, directly interacts with LMNA. Interacts with ISL1 (via N-terminal domain); the interaction represses ISL1 transactivator activity. Interactions of ISL1 with MLIP1 and GCN5/KAT2A may be mutually exclusive. As to expression, expressed in cardiomyoctes. Expression is highly reduced in hypertrophic cardiomyocytes.

The protein localises to the nucleus. The protein resides in the nucleus envelope. It localises to the PML body. Its subcellular location is the cytoplasm. It is found in the cytosol. The protein localises to the cell membrane. The protein resides in the sarcolemma. Required for myoblast differentiation into myotubes, possibly acting as a transcriptional regulator of the myogenic program. Required for cardiac adaptation to stress through integrated regulation of the AKT/mTOR pathways and FOXO1. Regulates cardiac homeostasis and plays a role in the protection against cardiac hypertrophy. Binds chromatin. May act as a transcriptional cofactor for ISL1, repressing its transcriptional activity. May also repress MYOCD transcriptional activity. The chain is Muscular LMNA-interacting protein from Rattus norvegicus (Rat).